Reading from the N-terminus, the 589-residue chain is Pyruvate kinase (589 aa).

Arg-32 contributes to the substrate binding site. K(+) is bound by residues Asn-34, Ser-36, Asp-66, and Thr-67. Residue 34-37 (NFSH) participates in ATP binding. Residues Arg-73 and Lys-157 each contribute to the ATP site. Glu-223 is a Mg(2+) binding site. Substrate-binding residues include Gly-246, Asp-247, and Thr-279. Asp-247 serves as a coordination point for Mg(2+).

This sequence belongs to the pyruvate kinase family. The protein in the C-terminal section; belongs to the PEP-utilizing enzyme family. As to quaternary structure, homotetramer. Mg(2+) is required as a cofactor. It depends on K(+) as a cofactor.

The catalysed reaction is pyruvate + ATP = phosphoenolpyruvate + ADP + H(+). Its pathway is carbohydrate degradation; glycolysis; pyruvate from D-glyceraldehyde 3-phosphate: step 5/5. Its activity is regulated as follows. Strongly activated by glucose-6-phosphate, ribose-5-phosphate and fructose-6-phosphate. Weak activator AMP and weak inhibitor fructose-1,6-bisphosphate can act as strong inhibitors in the presence of strong activators. This chain is Pyruvate kinase (pyk), found in Lactobacillus delbrueckii subsp. bulgaricus.